The sequence spans 252 residues: Intraflagellar transport associated protein 2 (252 aa).

GTP-binding positions include 35 to 42 (GPPKAGKT) and 118 to 125 (WDVSGDKK).

Belongs to the small GTPase superfamily. Rab family. In terms of assembly, component of the IFT complex B composed of at least che-2, che-13, dyf-1, dyf-3, dyf-6, dyf-11, dyf-13, ift-20, ift-74, ift-81, ifta-2, osm-1, osm-5 and osm-6. As to expression, ciliated sensory neurons.

The protein resides in the cytoplasm. The protein localises to the cytoskeleton. Its subcellular location is the cilium axoneme. Functionally, component of the intraflagellar transport (IFT) complex B required for transport of proteins in the motile cilium. May be required for ciliary entrance and transport of specific ciliary cargo proteins such as che-3 which are related to motility. Regulates specific signaling activities in the cilia, such as the daf-2/insulin receptor-like transduction pathway. This is Intraflagellar transport associated protein 2 from Caenorhabditis elegans.